Reading from the N-terminus, the 236-residue chain is Increased recombination centers protein 22-2 (236 aa).

Residues 1–19 (MKFSAILTALTATIATVAG) form the signal peptide. At 20–161 (YETSGKPHTV…AAVSFFDPRL (142 aa)) the chain is on the lumenal side. A helical membrane pass occupies residues 162–182 (IFLELVLLATFGGIAYFVYEI). Over 183–236 (WGKQYLRGTAPVKVPVKKSGSPVAVKEASPVGSASGFDESWIPEAHLKKNKKKA) the chain is Cytoplasmic.

It belongs to the IRC22 family.

It is found in the endoplasmic reticulum membrane. Functionally, is probably involved in a pathway contributing to genomic integrity. This is Increased recombination centers protein 22-2 (IRC22-2) from Candida tropicalis (strain ATCC MYA-3404 / T1) (Yeast).